Consider the following 314-residue polypeptide: 2-methoxy-6-polyprenyl-1,4-benzoquinol methylase, mitochondrial (314 aa).

The transit peptide at 1 to 19 (MLQSLNRSVRYLSTSIGSR) directs the protein to the mitochondrion. S-adenosyl-L-methionine contacts are provided by residues Thr-109, Asp-154, 186–187 (NS), and Ser-203.

It belongs to the class I-like SAM-binding methyltransferase superfamily. MenG/UbiE family. In terms of assembly, component of a multi-subunit COQ enzyme complex.

The protein resides in the mitochondrion inner membrane. The catalysed reaction is a 2-methoxy-6-(all-trans-polyprenyl)benzene-1,4-diol + S-adenosyl-L-methionine = a 5-methoxy-2-methyl-3-(all-trans-polyprenyl)benzene-1,4-diol + S-adenosyl-L-homocysteine + H(+). It participates in cofactor biosynthesis; ubiquinone biosynthesis. Functionally, methyltransferase required for the conversion of 2-polyprenyl-6-methoxy-1,4-benzoquinol (DDMQH2) to 2-polyprenyl-3-methyl-6-methoxy-1,4-benzoquinol (DMQH2). This chain is 2-methoxy-6-polyprenyl-1,4-benzoquinol methylase, mitochondrial, found in Dictyostelium discoideum (Social amoeba).